The following is a 316-amino-acid chain: ATP synthase gamma chain (316 aa).

It belongs to the ATPase gamma chain family. As to quaternary structure, F-type ATPases have 2 components, CF(1) - the catalytic core - and CF(0) - the membrane proton channel. CF(1) has five subunits: alpha(3), beta(3), gamma(1), delta(1), epsilon(1). CF(0) has three main subunits: a, b and c.

It is found in the cellular thylakoid membrane. Its function is as follows. Produces ATP from ADP in the presence of a proton gradient across the membrane. The gamma chain is believed to be important in regulating ATPase activity and the flow of protons through the CF(0) complex. The sequence is that of ATP synthase gamma chain from Prochlorococcus marinus (strain MIT 9312).